The following is a 239-amino-acid chain: MTKESIPNELLNLLNEEEIIMFRELQIKIQELNYKTNLTRLIEGDDYWISQVYDSLWTFKENTNKNFDNKKFIDIGSGCGFPGFAYAITHPNSEIYLVDSSKKKTDSLKEIIKSIKFKNDIFVINDRIENIGRQSSFKNGFNIATARAVSNPSTVSEYILPMLKSNGLGILYCGKWTNEDNKNLEKTLNVLEGQILEIKSNFLPREKGMRNVIFIEPKASCPDIYPRSIGKAEKYPLKG.

Residues Gly76, Phe81, Asp99–Ser101, Ile128–Glu129, and Arg147 contribute to the S-adenosyl-L-methionine site.

It belongs to the methyltransferase superfamily. RNA methyltransferase RsmG family.

Its subcellular location is the cytoplasm. Its function is as follows. Specifically methylates the N7 position of a guanine in 16S rRNA. The sequence is that of Ribosomal RNA small subunit methyltransferase G from Prochlorococcus marinus subsp. pastoris (strain CCMP1986 / NIES-2087 / MED4).